Reading from the N-terminus, the 300-residue chain is Arginine/serine-rich protein 1 (300 aa).

The disordered stretch occupies residues 1-142 (MSSAAVSKYV…RGRSHHRRSY (142 aa)). Phosphoserine is present on serine 17. The span at 23-36 (SPSTSGSGRSSRLS) shows a compositional bias: low complexity. Residues 37–104 (SRSRSRSSSR…RSRSRSRGHR (68 aa)) show a composition bias toward basic residues. Residues 105–115 (YYRDSRYEQPR) are compositionally biased toward basic and acidic residues. Residues 116–125 (RYYQSPSPYR) are compositionally biased toward low complexity. Phosphoserine occurs at positions 120 and 122. Positions 126–141 (SRSRSRSRGRSHHRRS) are enriched in basic residues. Arginine 147 carries the omega-N-methylarginine modification. The interval 222 to 300 (QGAVSCSGPK…KSPYGLWIPV (79 aa)) is disordered. A compositionally biased stretch (basic and acidic residues) spans 268-277 (PLEKTTKAAV). Serine 284 bears the Phosphoserine mark.

The protein belongs to the RSRP family. Phosphorylated. Phosphorylation at Ser-120 and Ser-122 mediates the interaction with spliceosome proteins.

The protein localises to the nucleus. Its function is as follows. Probably acts as a spliceosomal factor that contributes to spliceosome assembly and regulates the isoform switching of proteins such as PARP6. The sequence is that of Arginine/serine-rich protein 1 (Rsrp1) from Rattus norvegicus (Rat).